A 605-amino-acid polypeptide reads, in one-letter code: LysM domain receptor-like kinase 10 (605 aa).

A signal peptide spans 1–20; it reads MFSLPALLIGACAFAAAAVA. At 21-245 the chain is on the extracellular side; sequence ASGDGCRAGC…GMGNSLSGGA (225 aa). 3 cysteine pairs are disulfide-bonded: C26-C89, C30-C161, and C87-C159. Residue N44 is glycosylated (N-linked (GlcNAc...) asparagine). Chitin-binding positions include 115–121 and 142–148; these read GGDTYDA and PPGRIPG. N154 and N158 each carry an N-linked (GlcNAc...) asparagine glycan. Residues 174–221 form the LysM domain; that stretch reads LTYPLWDGETLESVAAQYGFSSPAEMELIRRYNPGMGGVSGKGIVFIP. A glycan (N-linked (GlcNAc...) asparagine) is linked at N226. The helical transmembrane segment at 246–266 threads the bilayer; the sequence is IAGIVIACIAIFIVAIWLIIM. The Cytoplasmic portion of the chain corresponds to 267–605; that stretch reads FYRWQKFRKA…DLRDMDYHPF (339 aa). Position 278 is a phosphoserine (S278). A Protein kinase domain is found at 317–591; sequence FSMEHKIGQG…RSVVVALMAL (275 aa). Residues 323 to 331 and K344 each bind ATP; that span reads IGQGGFGSV. Catalysis depends on D436, which acts as the Proton acceptor.

This sequence belongs to the protein kinase superfamily. Ser/Thr protein kinase family.

The protein resides in the cell membrane. It catalyses the reaction L-seryl-[protein] + ATP = O-phospho-L-seryl-[protein] + ADP + H(+). It carries out the reaction L-threonyl-[protein] + ATP = O-phospho-L-threonyl-[protein] + ADP + H(+). This chain is LysM domain receptor-like kinase 10, found in Oryza sativa subsp. japonica (Rice).